A 305-amino-acid chain; its full sequence is MGHALCVCSRGTVIIDNKRYLFVQKLGEGGFSYVDLVEGLHDGHFYALKRILCHEQQDQEEAQREADMHRLFQHPNILRLMAYSLKERGAKHEAWLLLPFFKRGTLWNEIERLKDQGNFLTEDQILPLLLGICRGLEAIHAKGYAHRDLKPTNILLGDEGQPVLMDLGSMNQACIQVEGSRQALALQDWAAQRCTISYRAPELFSVQSHCVIDERTDVWSLGCVLYAMMFGEGPYDMVFQKGDSVALAVQNDLSIPQSPRHSSALRQLLASMMTVDPQQRPHIPVLLSQLEALQPPAPGQHTTQI.

The N-myristoyl glycine moiety is linked to residue glycine 2. Residues cysteine 6 and cysteine 8 are each lipidated (S-palmitoyl cysteine). Residues 20–293 (YLFVQKLGEG…PVLLSQLEAL (274 aa)) form the Protein kinase domain. Residues 26–34 (LGEGGFSYV) and lysine 49 each bind ATP. The active-site Proton acceptor is aspartate 148. An activation loop region spans residues 166–202 (DLGSMNQACIQVEGSRQALALQDWAAQRCTISYRAPE). At serine 197 the chain carries Phosphoserine; by autocatalysis. At tyrosine 198 the chain carries Phosphotyrosine; by autocatalysis.

Belongs to the protein kinase superfamily. Ser/Thr protein kinase family. Monomer. Interacts with DRG1 (via its N-terminal); the interaction phosphorylates DRG1. In terms of processing, mainly autophosphorylated on serine/threonine residues. Also autophosphorylated on Tyr-198. Expressed in heart, liver, brain, spleen, lung, skeletal muscle, kidney and testis.

It is found in the cytoplasm. The protein localises to the perinuclear region. It localises to the membrane. It carries out the reaction L-seryl-[protein] + ATP = O-phospho-L-seryl-[protein] + ADP + H(+). It catalyses the reaction L-threonyl-[protein] + ATP = O-phospho-L-threonyl-[protein] + ADP + H(+). The enzyme catalyses L-tyrosyl-[protein] + ATP = O-phospho-L-tyrosyl-[protein] + ADP + H(+). Functionally, membrane-associated protein kinase that phosphorylates on serine and threonine residues. In vitro substrates include DRG1, ENO1 and EIF4EBP1. Also autophosphorylates. May be involved in secretory vesicle trafficking or intracellular signaling. May have a role in regulating stromal-epithelial interactions that occur during ductal morphogenesis in the mammary gland. May be involved in TGF-beta signaling. Able to autophosphorylate on Tyr residue; it is however unclear whether it has tyrosine-protein kinase toward other proteins. The chain is Serine/threonine-protein kinase 16 (Stk16) from Rattus norvegicus (Rat).